Reading from the N-terminus, the 367-residue chain is tRNA-specific 2-thiouridylase MnmA (367 aa).

Residues 12-19 (GMSGGVDS) and M38 each bind ATP. The interval 98–100 (NPD) is interaction with target base in tRNA. Residue C103 is the Nucleophile of the active site. A disulfide bond links C103 and C200. Residue G128 participates in ATP binding. The interval 150 to 152 (KDQ) is interaction with tRNA. The active-site Cysteine persulfide intermediate is C200. The interval 312-313 (RY) is interaction with tRNA.

Belongs to the MnmA/TRMU family. As to quaternary structure, interacts with TusE.

The protein localises to the cytoplasm. It catalyses the reaction S-sulfanyl-L-cysteinyl-[protein] + uridine(34) in tRNA + AH2 + ATP = 2-thiouridine(34) in tRNA + L-cysteinyl-[protein] + A + AMP + diphosphate + H(+). Its function is as follows. Catalyzes the 2-thiolation of uridine at the wobble position (U34) of tRNA(Lys), tRNA(Glu) and tRNA(Gln), leading to the formation of s(2)U34, the first step of tRNA-mnm(5)s(2)U34 synthesis. Sulfur is provided by IscS, via a sulfur-relay system. Binds ATP and its substrate tRNAs. The protein is tRNA-specific 2-thiouridylase MnmA of Photorhabdus laumondii subsp. laumondii (strain DSM 15139 / CIP 105565 / TT01) (Photorhabdus luminescens subsp. laumondii).